Here is a 412-residue protein sequence, read N- to C-terminus: Multifunctional CCA protein (412 aa).

Positions 8 and 11 each coordinate ATP. Residues glycine 8 and arginine 11 each coordinate CTP. Mg(2+) is bound by residues aspartate 21 and aspartate 23. ATP contacts are provided by arginine 91, arginine 137, and arginine 140. Arginine 91, arginine 137, and arginine 140 together coordinate CTP. In terms of domain architecture, HD spans 228–329; the sequence is TGIHTLMTLS…VKLFDSIDAW (102 aa).

It belongs to the tRNA nucleotidyltransferase/poly(A) polymerase family. Bacterial CCA-adding enzyme type 1 subfamily. In terms of assembly, monomer. Can also form homodimers and oligomers. Mg(2+) is required as a cofactor. The cofactor is Ni(2+).

The enzyme catalyses a tRNA precursor + 2 CTP + ATP = a tRNA with a 3' CCA end + 3 diphosphate. The catalysed reaction is a tRNA with a 3' CCA end + 2 CTP + ATP = a tRNA with a 3' CCACCA end + 3 diphosphate. Its function is as follows. Catalyzes the addition and repair of the essential 3'-terminal CCA sequence in tRNAs without using a nucleic acid template. Adds these three nucleotides in the order of C, C, and A to the tRNA nucleotide-73, using CTP and ATP as substrates and producing inorganic pyrophosphate. tRNA 3'-terminal CCA addition is required both for tRNA processing and repair. Also involved in tRNA surveillance by mediating tandem CCA addition to generate a CCACCA at the 3' terminus of unstable tRNAs. While stable tRNAs receive only 3'-terminal CCA, unstable tRNAs are marked with CCACCA and rapidly degraded. This is Multifunctional CCA protein from Escherichia coli (strain SMS-3-5 / SECEC).